The sequence spans 116 residues: Venom nerve growth factor (116 aa).

3 disulfide bridges follow: Cys-14–Cys-78, Cys-56–Cys-106, and Cys-66–Cys-108. Lys-86 is a binding site for a 1,2-diacyl-sn-glycerol.

Belongs to the NGF-beta family. Homodimer; non-covalently linked. Interacts with NTRK1. Not glycosylated. As to expression, expressed by the venom gland.

It is found in the secreted. Functionally, nerve growth factor is important for the development and maintenance of the sympathetic and sensory nervous systems. It stimulates division and differentiation of sympathetic and embryonic sensory neurons as well as basal forebrain cholinergic neurons in the brain. Its relevance in the snake venom is not clear. However, it has been shown to inhibit metalloproteinase-dependent proteolysis of platelet glycoprotein Ib alpha, suggesting a metalloproteinase inhibition to prevent metalloprotease autodigestion and/or protection against prey proteases. Binds a lipid between the two protein chains in the homodimer. The lipid-bound form promotes histamine relase from mouse mast cells, contrary to the lipid-free form. The polypeptide is Venom nerve growth factor (Naja atra (Chinese cobra)).